We begin with the raw amino-acid sequence, 155 residues long: Small ribosomal subunit protein uS7cz/uS7cy (155 aa).

Belongs to the universal ribosomal protein uS7 family. In terms of assembly, part of the 30S ribosomal subunit.

The protein localises to the plastid. The protein resides in the chloroplast. One of the primary rRNA binding proteins, it binds directly to 16S rRNA where it nucleates assembly of the head domain of the 30S subunit. The protein is Small ribosomal subunit protein uS7cz/uS7cy (rps7-A) of Lemna minor (Common duckweed).